The primary structure comprises 1830 residues: Urea amidolyase (1830 aa).

ATP is bound by residues 115–122 (GAIVIGKT), Lys-740, Glu-823, and Asn-858. Residues 625 to 1068 (PFETVLIANR…ATKILDSYDY (444 aa)) enclose the Biotin carboxylation domain. The ATP-grasp domain occupies 744–941 (REIAEKAGVP…LVEWMLRIAA (198 aa)). The region spanning 1752 to 1830 (AVEEEYPEDA…DAGDLVAVIQ (79 aa)) is the Biotinyl-binding domain. N6-biotinyllysine is present on Lys-1796.

Belongs to the DUR1,2 family. In terms of assembly, monomer. Biotin serves as cofactor.

The enzyme catalyses urea + hydrogencarbonate + ATP = urea-1-carboxylate + ADP + phosphate + H(+). It catalyses the reaction urea-1-carboxylate + H2O + 3 H(+) = 2 NH4(+) + 2 CO2. It functions in the pathway nitrogen metabolism; urea degradation; CO(2) and NH(3) from urea (allophanate route): step 1/2. It participates in nitrogen metabolism; urea degradation; CO(2) and NH(3) from urea (allophanate route): step 2/2. In terms of biological role, involved in uracil catabolism. Hydrolysis of urea to ammonia and CO(2). The chain is Urea amidolyase (DUR1,2) from Lachancea kluyveri (Yeast).